A 214-amino-acid polypeptide reads, in one-letter code: Outer-membrane lipoprotein LolB (214 aa).

An N-terminal signal peptide occupies residues 1 to 25 (MNNLKRLTKTIFSCFTLSALLLLAG). Cys26 carries N-palmitoyl cysteine lipidation. Residue Cys26 is the site of S-diacylglycerol cysteine attachment.

It belongs to the LolB family. In terms of assembly, monomer.

It localises to the cell outer membrane. Plays a critical role in the incorporation of lipoproteins in the outer membrane after they are released by the LolA protein. This Shewanella baltica (strain OS155 / ATCC BAA-1091) protein is Outer-membrane lipoprotein LolB.